The primary structure comprises 110 residues: Large ribosomal subunit protein uL22 (110 aa).

It belongs to the universal ribosomal protein uL22 family. Part of the 50S ribosomal subunit.

In terms of biological role, this protein binds specifically to 23S rRNA; its binding is stimulated by other ribosomal proteins, e.g. L4, L17, and L20. It is important during the early stages of 50S assembly. It makes multiple contacts with different domains of the 23S rRNA in the assembled 50S subunit and ribosome. The globular domain of the protein is located near the polypeptide exit tunnel on the outside of the subunit, while an extended beta-hairpin is found that lines the wall of the exit tunnel in the center of the 70S ribosome. In Haemophilus influenzae (strain 86-028NP), this protein is Large ribosomal subunit protein uL22.